A 370-amino-acid polypeptide reads, in one-letter code: Lipoyl synthase, mitochondrial (370 aa).

Residues C104, C109, C115, C135, C139, C142, and S350 each coordinate [4Fe-4S] cluster. Positions 118 to 339 (GGDKSKATAT…KQKALELGFL (222 aa)) constitute a Radical SAM core domain.

Belongs to the radical SAM superfamily. Lipoyl synthase family. Requires [4Fe-4S] cluster as cofactor.

Its subcellular location is the mitochondrion. The catalysed reaction is [[Fe-S] cluster scaffold protein carrying a second [4Fe-4S](2+) cluster] + N(6)-octanoyl-L-lysyl-[protein] + 2 oxidized [2Fe-2S]-[ferredoxin] + 2 S-adenosyl-L-methionine + 4 H(+) = [[Fe-S] cluster scaffold protein] + N(6)-[(R)-dihydrolipoyl]-L-lysyl-[protein] + 4 Fe(3+) + 2 hydrogen sulfide + 2 5'-deoxyadenosine + 2 L-methionine + 2 reduced [2Fe-2S]-[ferredoxin]. It participates in protein modification; protein lipoylation via endogenous pathway; protein N(6)-(lipoyl)lysine from octanoyl-[acyl-carrier-protein]: step 2/2. Its function is as follows. Catalyzes the radical-mediated insertion of two sulfur atoms into the C-6 and C-8 positions of the octanoyl moiety bound to the lipoyl domains of lipoate-dependent enzymes, thereby converting the octanoylated domains into lipoylated derivatives. The chain is Lipoyl synthase, mitochondrial from Kluyveromyces lactis (strain ATCC 8585 / CBS 2359 / DSM 70799 / NBRC 1267 / NRRL Y-1140 / WM37) (Yeast).